The chain runs to 140 residues: HTH-type transcriptional regulator AdhR (140 aa).

The HTH merR-type domain occupies 1 to 69 (MNIAQVAKQF…IEALIEYTTL (69 aa)). The H-T-H motif DNA-binding region spans 3–22 (IAQVAKQFGLTAATLRYYER). Positions 75-125 (RTVEARKNILADERQRLIEKRKEIDETIKRLDTKIKDYDGKLRENEAKLKS) form a coiled coil. The interval 120 to 140 (EAKLKSRPKTESLHGSVEQRR) is disordered.

Its function is as follows. Transcriptional regulator involved in the response to aldehyde stress. Binds to the promoter region of the adhA-yraA operon, the yraC and its own promoter region; binding is unchanged in the presence of aldehydes. This chain is HTH-type transcriptional regulator AdhR (adhR), found in Bacillus subtilis (strain 168).